A 291-amino-acid polypeptide reads, in one-letter code: ATP synthase gamma chain (291 aa).

Belongs to the ATPase gamma chain family. In terms of assembly, F-type ATPases have 2 components, CF(1) - the catalytic core - and CF(0) - the membrane proton channel. CF(1) has five subunits: alpha(3), beta(3), gamma(1), delta(1), epsilon(1). CF(0) has three main subunits: a, b and c.

It is found in the cell inner membrane. Functionally, produces ATP from ADP in the presence of a proton gradient across the membrane. The gamma chain is believed to be important in regulating ATPase activity and the flow of protons through the CF(0) complex. This chain is ATP synthase gamma chain, found in Burkholderia mallei (strain NCTC 10247).